The chain runs to 200 residues: MLKYPDYISKLISFLKKLPGIGFKSAEKIAFELLEWDPSQVEAMGLAMQEFSASHATCPDCFCLKTSKTSSCDFCSESRDSSFLCIVATPKDVFSFEKSKIFKGRYFVLGNLLSPITGKHLSLEKLNILKQRIEDFAPKEMIIALDATLEGDATALFLKQEFSHLPIKISRLALGMPVGLSFDFIDSNTLARAFSGRNCF.

A C4-type zinc finger spans residues 58–75 (CPDCFCLKTSKTSSCDFC). The 96-residue stretch at 82–177 (SFLCIVATPK…KISRLALGMP (96 aa)) folds into the Toprim domain.

It belongs to the RecR family.

Functionally, may play a role in DNA repair. It seems to be involved in an RecBC-independent recombinational process of DNA repair. It may act with RecF and RecO. The protein is Recombination protein RecR of Chlamydia muridarum (strain MoPn / Nigg).